The sequence spans 453 residues: tRNA modification GTPase MnmE (453 aa).

Residues Arg-22, Glu-79, and Lys-119 each contribute to the (6S)-5-formyl-5,6,7,8-tetrahydrofolate site. Residues 215–376 (GMKVVIAGRP…LKQHLKSLMG (162 aa)) enclose the TrmE-type G domain. Asn-225 is a binding site for K(+). Residues 225 to 230 (NAGKSS), 244 to 250 (TEIAGTT), 269 to 272 (DTAG), and 334 to 337 (NKAD) contribute to the GTP site. Position 229 (Ser-229) interacts with Mg(2+). Thr-244, Ile-246, and Thr-249 together coordinate K(+). Thr-250 provides a ligand contact to Mg(2+). A (6S)-5-formyl-5,6,7,8-tetrahydrofolate-binding site is contributed by Lys-453.

It belongs to the TRAFAC class TrmE-Era-EngA-EngB-Septin-like GTPase superfamily. TrmE GTPase family. Homodimer. Heterotetramer of two MnmE and two MnmG subunits. It depends on K(+) as a cofactor.

The protein resides in the cytoplasm. Functionally, exhibits a very high intrinsic GTPase hydrolysis rate. Involved in the addition of a carboxymethylaminomethyl (cmnm) group at the wobble position (U34) of certain tRNAs, forming tRNA-cmnm(5)s(2)U34. This is tRNA modification GTPase MnmE from Shewanella frigidimarina (strain NCIMB 400).